Consider the following 290-residue polypeptide: uncharacterized protein (290 aa).

Disordered regions lie at residues Gln17–Ser91 and Asp220–Asn259. A compositionally biased stretch (polar residues) spans Asn40 to Leu50. Residues Ser66–Lys83 are compositionally biased toward basic residues. Over residues Glu233–Gln249 the composition is skewed to basic and acidic residues.

This is an uncharacterized protein from Saccharomyces cerevisiae (strain ATCC 204508 / S288c) (Baker's yeast).